We begin with the raw amino-acid sequence, 445 residues long: Phosphoglucosamine mutase (445 aa).

The active-site Phosphoserine intermediate is Ser-99. 4 residues coordinate Mg(2+): Ser-99, Asp-242, Asp-244, and Asp-246. Ser-99 bears the Phosphoserine mark.

Belongs to the phosphohexose mutase family. Mg(2+) serves as cofactor. Activated by phosphorylation.

It carries out the reaction alpha-D-glucosamine 1-phosphate = D-glucosamine 6-phosphate. Catalyzes the conversion of glucosamine-6-phosphate to glucosamine-1-phosphate. This chain is Phosphoglucosamine mutase, found in Helicobacter pylori (strain Shi470).